The primary structure comprises 190 residues: Nucleoside triphosphate pyrophosphatase (190 aa).

Asp-69 functions as the Proton acceptor in the catalytic mechanism.

Belongs to the Maf family. The cofactor is a divalent metal cation.

It localises to the cytoplasm. The catalysed reaction is a ribonucleoside 5'-triphosphate + H2O = a ribonucleoside 5'-phosphate + diphosphate + H(+). It carries out the reaction a 2'-deoxyribonucleoside 5'-triphosphate + H2O = a 2'-deoxyribonucleoside 5'-phosphate + diphosphate + H(+). Nucleoside triphosphate pyrophosphatase. May have a dual role in cell division arrest and in preventing the incorporation of modified nucleotides into cellular nucleic acids. The chain is Nucleoside triphosphate pyrophosphatase from Helicobacter pylori (strain Shi470).